A 167-amino-acid chain; its full sequence is Small ribosomal subunit protein uS5 (167 aa).

Residues 11-74 form the S5 DRBM domain; sequence LQEKLIAVNR…EKARRAMINV (64 aa).

It belongs to the universal ribosomal protein uS5 family. As to quaternary structure, part of the 30S ribosomal subunit. Contacts proteins S4 and S8.

With S4 and S12 plays an important role in translational accuracy. Functionally, located at the back of the 30S subunit body where it stabilizes the conformation of the head with respect to the body. In Yersinia enterocolitica serotype O:8 / biotype 1B (strain NCTC 13174 / 8081), this protein is Small ribosomal subunit protein uS5.